The following is a 228-amino-acid chain: Ribosomal RNA small subunit methyltransferase G (228 aa).

S-adenosyl-L-methionine-binding positions include Gly-89, Leu-94, 140 to 141 (VE), and Arg-159.

Belongs to the methyltransferase superfamily. RNA methyltransferase RsmG family.

It is found in the cytoplasm. The enzyme catalyses guanosine(527) in 16S rRNA + S-adenosyl-L-methionine = N(7)-methylguanosine(527) in 16S rRNA + S-adenosyl-L-homocysteine. Specifically methylates the N7 position of guanine in position 527 of 16S rRNA. In Burkholderia cenocepacia (strain ATCC BAA-245 / DSM 16553 / LMG 16656 / NCTC 13227 / J2315 / CF5610) (Burkholderia cepacia (strain J2315)), this protein is Ribosomal RNA small subunit methyltransferase G.